A 1827-amino-acid polypeptide reads, in one-letter code: Laminin subunit beta-4 (1827 aa).

The first 21 residues, 1-21, serve as a signal peptide directing secretion; the sequence is MLLRLELSALLLLLIAAPVRL. Residues 26–266 form the Laminin N-terminal domain; it reads VGNSCYPNLG…ALYEMVVRGS (241 aa). Asn231 carries an N-linked (GlcNAc...) asparagine glycan. Intrachain disulfides connect Cys267–Cys276, Cys269–Cys297, Cys299–Cys308, Cys311–Cys331, Cys334–Cys343, Cys336–Cys361, Cys364–Cys373, Cys376–Cys394, Cys397–Cys410, Cys399–Cys417, Cys419–Cys428, Cys431–Cys446, Cys449–Cys463, Cys451–Cys470, Cys472–Cys481, Cys484–Cys498, Cys501–Cys513, Cys503–Cys520, and Cys522–Cys531. 4 Laminin EGF-like domains span residues 267–333, 334–396, 397–448, and 449–500; these read CFCN…VCKR, CNCH…ACIP, CDCD…GCQL, and CRCN…GCIP. Residues 501–544 form the Laminin EGF-like 5; truncated domain; it reads CDCDIGGALKTECSSVDGQCKCRPNMVGQKCNDPAPGYFLAPLD. The region spanning 540 to 847 is the Laminin IV type B domain; it reads LAPLDFYIYE…LIGSMSAFIH (308 aa). 32 cysteine pairs are disulfide-bonded: Cys853/Cys865, Cys855/Cys872, Cys874/Cys883, Cys886/Cys898, Cys901/Cys913, Cys903/Cys920, Cys922/Cys931, Cys934/Cys944, Cys947/Cys956, Cys949/Cys963, Cys966/Cys975, Cys978/Cys992, Cys995/Cys1011, Cys997/Cys1022, Cys1024/Cys1033, Cys1036/Cys1051, Cys1054/Cys1068, Cys1056/Cys1075, Cys1078/Cys1087, Cys1090/Cys1103, Cys1106/Cys1126, Cys1108/Cys1133, Cys1135/Cys1144, Cys1147/Cys1160, Cys1163/Cys1175, Cys1165/Cys1182, Cys1184/Cys1193, Cys1196/Cys1208, Cys1211/Cys1223, Cys1213/Cys1230, Cys1232/Cys1241, and Cys1244/Cys1255. 8 consecutive Laminin EGF-like domains span residues 853-900, 901-946, 947-994, 995-1053, 1054-1105, 1106-1162, 1163-1210, and 1211-1257; these read CNCH…GCSP, CDCD…LCRR, CQCN…PCEP, CLCP…RCKE, CCCN…DCKE, CSCD…GCQP, CNCN…QCMF, and CDCN…ACEP. A glycan (N-linked (GlcNAc...) asparagine) is linked at Asn1001. Residues 1258 to 1449 are domain II; the sequence is CHACNHLWEK…LSAANINEEV (192 aa). 2 coiled-coil regions span residues 1294 to 1335 and 1385 to 1449; these read ELQH…EIID and NKIK…NEEV. N-linked (GlcNAc...) asparagine glycosylation is present at Asn1329. Residues 1450-1476 are domain alpha; that stretch reads CGAPGDAECEKAKCGGALCGKCGGPDC. The domain I stretch occupies residues 1477 to 1827; the sequence is TGSLPISLNA…KVQRYNLCSP (351 aa). Residues Asn1485, Asn1496, Asn1513, Asn1533, Asn1599, Asn1629, Asn1644, Asn1672, Asn1686, Asn1702, Asn1726, Asn1745, Asn1750, and Asn1761 are each glycosylated (N-linked (GlcNAc...) asparagine). 2 coiled-coil regions span residues 1485-1554 and 1584-1820; these read NASK…EKVK and DEIK…DKVQ.

As to quaternary structure, laminin is a complex glycoprotein, consisting of three different polypeptide chains (alpha, beta, gamma), which are bound to each other by disulfide bonds into a cross-shaped molecule comprising one long and three short arms with globules at each end.

The protein resides in the secreted. Its subcellular location is the extracellular space. It localises to the extracellular matrix. The protein localises to the basement membrane. In terms of biological role, binding to cells via a high affinity receptor, laminin is thought to mediate the attachment, migration and organization of cells into tissues during embryonic development by interacting with other extracellular matrix components. Positively regulates apical-basal distribution of Muller glia cells in the retina. The protein is Laminin subunit beta-4 (lamb4) of Danio rerio (Zebrafish).